The primary structure comprises 442 residues: tRNA-2-methylthio-N(6)-dimethylallyladenosine synthase (442 aa).

Residues 2 to 120 (KKVFIRTFGC…LPKMIVDKET (119 aa)) enclose the MTTase N-terminal domain. The [4Fe-4S] cluster site is built by C11, C49, C83, C157, C161, and C164. A Radical SAM core domain is found at 143–375 (RVEGGAAFVS…NEVIEAETAR (233 aa)). The region spanning 378–441 (QTMIGTVQRC…TFSLRGKVVE (64 aa)) is the TRAM domain.

The protein belongs to the methylthiotransferase family. MiaB subfamily. As to quaternary structure, monomer. The cofactor is [4Fe-4S] cluster.

The protein localises to the cytoplasm. It carries out the reaction N(6)-dimethylallyladenosine(37) in tRNA + (sulfur carrier)-SH + AH2 + 2 S-adenosyl-L-methionine = 2-methylsulfanyl-N(6)-dimethylallyladenosine(37) in tRNA + (sulfur carrier)-H + 5'-deoxyadenosine + L-methionine + A + S-adenosyl-L-homocysteine + 2 H(+). Catalyzes the methylthiolation of N6-(dimethylallyl)adenosine (i(6)A), leading to the formation of 2-methylthio-N6-(dimethylallyl)adenosine (ms(2)i(6)A) at position 37 in tRNAs that read codons beginning with uridine. The polypeptide is tRNA-2-methylthio-N(6)-dimethylallyladenosine synthase (Neisseria meningitidis serogroup C (strain 053442)).